The sequence spans 255 residues: tRNA (guanine-N(7)-)-methyltransferase (255 aa).

The segment at 1–21 (MMHDDPNEAGLPPHDDAIPDE) is disordered. Positions 86, 111, 138, and 161 each coordinate S-adenosyl-L-methionine. Aspartate 161 is an active-site residue. Residues lysine 165, aspartate 197, and 232-235 (TKFE) contribute to the substrate site.

Belongs to the class I-like SAM-binding methyltransferase superfamily. TrmB family.

The enzyme catalyses guanosine(46) in tRNA + S-adenosyl-L-methionine = N(7)-methylguanosine(46) in tRNA + S-adenosyl-L-homocysteine. It participates in tRNA modification; N(7)-methylguanine-tRNA biosynthesis. Its function is as follows. Catalyzes the formation of N(7)-methylguanine at position 46 (m7G46) in tRNA. This chain is tRNA (guanine-N(7)-)-methyltransferase, found in Burkholderia lata (strain ATCC 17760 / DSM 23089 / LMG 22485 / NCIMB 9086 / R18194 / 383).